Reading from the N-terminus, the 134-residue chain is Replication enhancer protein (134 aa).

It belongs to the geminiviridae replication enhancer protein family. As to quaternary structure, homooligomer. Interacts with the replication-associated protein (REP). Interacts with host proliferating cell nuclear antigen (PCNA). Interacts with host retinoblastoma-related protein 1 (RBR1), and may thereby deregulate the host cell cycle. Oligomerization and interaction with PCNA are necessary for optimal replication enhancement.

Functionally, increases viral DNA accumulation. Enhances infectivity and symptom expression. The chain is Replication enhancer protein from Squash leaf curl virus (SLCV).